A 184-amino-acid chain; its full sequence is Photosystem I assembly protein Ycf4 (184 aa).

The next 2 membrane-spanning stretches (helical) occupy residues 19–39 (ISNLCWAFILFLGSLGFFLVG) and 57–77 (IIFFPQGIVMSFYGIAGLFIS).

This sequence belongs to the Ycf4 family.

The protein resides in the plastid thylakoid membrane. Functionally, seems to be required for the assembly of the photosystem I complex. In Cuscuta exaltata (Tall dodder), this protein is Photosystem I assembly protein Ycf4.